Reading from the N-terminus, the 561-residue chain is uncharacterized protein (561 aa).

The next 2 helical transmembrane spans lie at 29–49 and 80–100; these read FIFN…KKII and FLFH…ASII.

The protein localises to the cell membrane. This is an uncharacterized protein from Mycoplasma genitalium (strain ATCC 33530 / DSM 19775 / NCTC 10195 / G37) (Mycoplasmoides genitalium).